We begin with the raw amino-acid sequence, 282 residues long: tRNA pseudouridine synthase B (282 aa).

Residue Asp-39 is the Nucleophile of the active site.

It belongs to the pseudouridine synthase TruB family. Type 1 subfamily.

The catalysed reaction is uridine(55) in tRNA = pseudouridine(55) in tRNA. In terms of biological role, responsible for synthesis of pseudouridine from uracil-55 in the psi GC loop of transfer RNAs. The protein is tRNA pseudouridine synthase B of Borreliella burgdorferi (strain ATCC 35210 / DSM 4680 / CIP 102532 / B31) (Borrelia burgdorferi).